We begin with the raw amino-acid sequence, 293 residues long: Homoserine kinase (293 aa).

An ATP-binding site is contributed by 84–94 (PISRGLGSSSA).

Belongs to the GHMP kinase family. Homoserine kinase subfamily.

The protein resides in the cytoplasm. It carries out the reaction L-homoserine + ATP = O-phospho-L-homoserine + ADP + H(+). It participates in amino-acid biosynthesis; L-threonine biosynthesis; L-threonine from L-aspartate: step 4/5. In terms of biological role, catalyzes the ATP-dependent phosphorylation of L-homoserine to L-homoserine phosphate. The sequence is that of Homoserine kinase from Wolinella succinogenes (strain ATCC 29543 / DSM 1740 / CCUG 13145 / JCM 31913 / LMG 7466 / NCTC 11488 / FDC 602W) (Vibrio succinogenes).